A 103-amino-acid chain; its full sequence is Large ribosomal subunit protein bL21 (103 aa).

The protein belongs to the bacterial ribosomal protein bL21 family. In terms of assembly, part of the 50S ribosomal subunit. Contacts protein L20.

This protein binds to 23S rRNA in the presence of protein L20. This chain is Large ribosomal subunit protein bL21, found in Brevibacillus brevis (strain 47 / JCM 6285 / NBRC 100599).